Consider the following 224-residue polypeptide: Phosphoglycolate phosphatase (224 aa).

Aspartate 8 functions as the Nucleophile in the catalytic mechanism. Residues aspartate 8, aspartate 10, glycine 11, and glycine 43 each coordinate Mg(2+). Residue lysine 151 participates in substrate binding. Positions 174, 175, and 178 each coordinate Mg(2+).

Belongs to the HAD-like hydrolase superfamily. Archaeal SPP-like hydrolase family. As to quaternary structure, homodimer. Mg(2+) serves as cofactor.

The catalysed reaction is 2-phosphoglycolate + H2O = glycolate + phosphate. Inhibited by Ca(2+) ions and by high chloride ion concentration. By contrast, low chloride concentration (up to 50 mM) slightly activate the enzyme. Its function is as follows. Catalyzes the dephosphorylation of 2-phosphoglycolate. Also has significant, but less efficient, pyrophosphatase activity, since it is able to catalyze the release of phosphate from inorganic pyrophosphate (PPi). The chain is Phosphoglycolate phosphatase from Thermoplasma acidophilum (strain ATCC 25905 / DSM 1728 / JCM 9062 / NBRC 15155 / AMRC-C165).